The sequence spans 190 residues: ATP synthase subunit C lysine N-methyltransferase (190 aa).

Belongs to the ANT/ATPSC lysine N-methyltransferase family.

The protein resides in the mitochondrion. It carries out the reaction L-lysyl-[protein] + 3 S-adenosyl-L-methionine = N(6),N(6),N(6)-trimethyl-L-lysyl-[protein] + 3 S-adenosyl-L-homocysteine + 3 H(+). Functionally, mitochondrial protein-lysine N-methyltransferase that trimethylates ATP synthase subunit C. Trimethylation is required for proper incorporation of the C subunit into the ATP synthase complex and mitochondrial respiration. This Caenorhabditis elegans protein is ATP synthase subunit C lysine N-methyltransferase.